A 349-amino-acid polypeptide reads, in one-letter code: uncharacterized protein (349 aa).

Residues 17 to 37 (VIAIVSTGLVFAMTLVLTGLV) form a helical membrane-spanning segment. The tract at residues 111-131 (FGAPEHGPGMPRVSDGRAPST) is disordered. The next 3 helical transmembrane spans lie at 230–250 (AITVVAVLLWIVAALIVGSVV), 284–304 (VVALLAAVVGGILSLLLAPLF), and 308–328 (VVVPLSAFVALPAIATVIGLL).

It belongs to the ABC-4 integral membrane protein family.

It localises to the cell membrane. This is an uncharacterized protein from Mycobacterium bovis (strain ATCC BAA-935 / AF2122/97).